Reading from the N-terminus, the 125-residue chain is S-adenosylmethionine decarboxylase proenzyme (125 aa).

Catalysis depends on Ser63, which acts as the Schiff-base intermediate with substrate; via pyruvic acid. Ser63 bears the Pyruvic acid (Ser); by autocatalysis mark. His68 acts as the Proton acceptor; for processing activity in catalysis. The active-site Proton donor; for catalytic activity is the Cys83.

The protein belongs to the prokaryotic AdoMetDC family. Type 1 subfamily. In terms of assembly, heterotetramer of two alpha and two beta chains arranged as a dimer of alpha/beta heterodimers. It depends on pyruvate as a cofactor. Is synthesized initially as an inactive proenzyme. Formation of the active enzyme involves a self-maturation process in which the active site pyruvoyl group is generated from an internal serine residue via an autocatalytic post-translational modification. Two non-identical subunits are generated from the proenzyme in this reaction, and the pyruvate is formed at the N-terminus of the alpha chain, which is derived from the carboxyl end of the proenzyme. The post-translation cleavage follows an unusual pathway, termed non-hydrolytic serinolysis, in which the side chain hydroxyl group of the serine supplies its oxygen atom to form the C-terminus of the beta chain, while the remainder of the serine residue undergoes an oxidative deamination to produce ammonia and the pyruvoyl group blocking the N-terminus of the alpha chain.

It catalyses the reaction S-adenosyl-L-methionine + H(+) = S-adenosyl 3-(methylsulfanyl)propylamine + CO2. It participates in amine and polyamine biosynthesis; S-adenosylmethioninamine biosynthesis; S-adenosylmethioninamine from S-adenosyl-L-methionine: step 1/1. In terms of biological role, catalyzes the decarboxylation of S-adenosylmethionine to S-adenosylmethioninamine (dcAdoMet), the propylamine donor required for the synthesis of the polyamines spermine and spermidine from the diamine putrescine. The polypeptide is S-adenosylmethionine decarboxylase proenzyme (Moorella thermoacetica (strain ATCC 39073 / JCM 9320)).